Reading from the N-terminus, the 398-residue chain is Phospholipase C (398 aa).

The signal sequence occupies residues 1-28 (MKKKFLKGLCCAFVISITCLGASSKAYG). The Zn(2+) site is built by W29, H39, D84, H96, H154, D158, H164, H176, and E180. One can recognise a Zn-dependent PLC domain in the interval 29 to 278 (WDGKKDGTGT…YDVSKDLLPT (250 aa)). Positions 275–283 (LLPTENHKI) are linker. The region spanning 284–398 (NGLMVVIKTA…IHGNEKYYIN (115 aa)) is the PLAT domain. Ca(2+) contacts are provided by G299, T300, D301, D321, N322, G324, N325, D326, and D364.

This sequence belongs to the bacterial zinc-metallophospholipase C family. Requires Ca(2+) as cofactor. The cofactor is Zn(2+).

It localises to the secreted. It carries out the reaction a 1,2-diacyl-sn-glycero-3-phosphocholine + H2O = phosphocholine + a 1,2-diacyl-sn-glycerol + H(+). Functionally, bacterial hemolysins are exotoxins that attack blood cell membranes and cause cell rupture. Binds to eukaryotic membranes where it hydrolyzes phosphatidylcholine, sphingomyelin and phosphatidylethanolamine. The diacylglycerol produced can activate both the arachidonic acid pathway, leading to modulation of the inflammatory response cascade and thrombosis, and protein kinase C, leading to activation of eukaryotic phospholipases and further membrane damage. This enzyme is hemolytic against horse erythrocytes. The sequence is that of Phospholipase C (plc) from Clostridium novyi.